The primary structure comprises 84 residues: uncharacterized protein (84 aa).

Residues 13–35 (TTLVLTIISTTTTTLFAIIQLYL) traverse the membrane as a helical segment. A coiled-coil region spans residues 41–84 (LKDAVKEIVNSELSNLKTEIEELKIKQDELSRQVEEIKRKLDQK).

It is found in the host membrane. This is an uncharacterized protein from Sulfolobus islandicus rod-shaped virus 1 (SIRV-1).